A 1259-amino-acid polypeptide reads, in one-letter code: uncharacterized protein (1259 aa).

Residues 354-410 form a disordered region; sequence KLNQAGGKRNSSMNNSTQNNNSSRSNNSARNNNSVWNNNNSAWKNNNSAWNDNSSWK. Low complexity predominate over residues 362-410; it reads RNSSMNNSTQNNNSSRSNNSARNNNSVWNNNNSAWKNNNSAWNDNSSWK.

The protein resides in the virion. This is an uncharacterized protein from Acanthamoeba polyphaga (Amoeba).